We begin with the raw amino-acid sequence, 136 residues long: uncharacterized protein (136 aa).

This is an uncharacterized protein from Methanocaldococcus jannaschii (strain ATCC 43067 / DSM 2661 / JAL-1 / JCM 10045 / NBRC 100440) (Methanococcus jannaschii).